Consider the following 247-residue polypeptide: Ribosomal RNA large subunit methyltransferase E (247 aa).

S-adenosyl-L-methionine-binding residues include glycine 99, tryptophan 101, aspartate 123, aspartate 139, and aspartate 162. Lysine 202 acts as the Proton acceptor in catalysis.

Belongs to the class I-like SAM-binding methyltransferase superfamily. RNA methyltransferase RlmE family.

It is found in the cytoplasm. It carries out the reaction uridine(2552) in 23S rRNA + S-adenosyl-L-methionine = 2'-O-methyluridine(2552) in 23S rRNA + S-adenosyl-L-homocysteine + H(+). Its function is as follows. Specifically methylates the uridine in position 2552 of 23S rRNA at the 2'-O position of the ribose in the fully assembled 50S ribosomal subunit. This is Ribosomal RNA large subunit methyltransferase E from Anaplasma phagocytophilum (strain HZ).